A 621-amino-acid polypeptide reads, in one-letter code: Chaperone protein DnaK (621 aa).

Thr175 carries the post-translational modification Phosphothreonine; by autocatalysis. Residues Glu499–Asn516 show a composition bias toward basic and acidic residues. Disordered regions lie at residues Glu499–Asn520 and Ala583–Lys621. Low complexity predominate over residues Ala583–Gly602. The segment covering Gly603–Lys621 has biased composition (acidic residues).

Belongs to the heat shock protein 70 family.

In terms of biological role, acts as a chaperone. The chain is Chaperone protein DnaK from Bifidobacterium animalis subsp. lactis (strain AD011).